Here is a 450-residue protein sequence, read N- to C-terminus: Akuammiline synthase 2 (450 aa).

Histidine 154 serves as the catalytic Proton acceptor. A Nuclear localization signal motif is present at residues 218-225 (MRRFVFDA). The Proton acceptor role is filled by aspartate 376.

It belongs to the plant acyltransferase family. Monomer.

Its subcellular location is the cytoplasm. The protein resides in the nucleus. It catalyses the reaction rhazimol + acetyl-CoA = akuammiline + CoA + H(+). It participates in alkaloid biosynthesis. Its function is as follows. Acyltransferase involved in the biosynthesis of akuammilan monoterpene indole alkaloids (MIAs) natural products, components with various biological properties such as antidiabetic, antibacterial, anti-inflammatory, anticancer, and antimalarial activities. Catalyzes the conversion of rhazimol to akuammiline. The sequence is that of Akuammiline synthase 2 from Alstonia scholaris (Dogbane).